Here is a 223-residue protein sequence, read N- to C-terminus: uncharacterized protein (223 aa).

Residues 1–17 (MLGQGLIFISLAFVAHA) form the signal peptide. A glycan (N-linked (GlcNAc...) asparagine) is linked at Asn58. The tract at residues 149–188 (VRKKGSRPSKPQKEKQGNKQGSKTEESPNVDEDELESEPE) is disordered. Basic and acidic residues predominate over residues 159–174 (PQKEKQGNKQGSKTEE). The span at 176–187 (PNVDEDELESEP) shows a compositional bias: acidic residues. A helical membrane pass occupies residues 191-211 (TFFQKYGLYLIPILFLIIMSG).

It localises to the endoplasmic reticulum membrane. This is an uncharacterized protein from Schizosaccharomyces pombe (strain 972 / ATCC 24843) (Fission yeast).